The sequence spans 354 residues: Selection and upkeep of intraepithelial T-cells protein 1 (354 aa).

One can recognise an Ig-like V-type 1 domain in the interval 23-141; the sequence is PSSEQFTVNS…EEAIAEVKVT (119 aa). Disulfide bonds link Cys49–Cys123 and Cys163–Cys217. Residues 161 to 233 form the Ig-like C1-type 2 domain; that stretch reads VECNSEGWFP…TGQEERTSIV (73 aa). The next 3 helical transmembrane spans lie at 243 to 263, 283 to 303, and 326 to 346; these read SVWI…IMMP, LIGI…TITL, and MTVM…LVYF.

This sequence belongs to the SKINT family. As to expression, expressed in the thymus and skin.

The protein resides in the membrane. Its function is as follows. May act by engaging a cell surface molecule on immature T-cells in the embryonic thymus. This is Selection and upkeep of intraepithelial T-cells protein 1 (SKINT1) from Macaca fascicularis (Crab-eating macaque).